Consider the following 23-residue polypeptide: Endochitinase B (23 aa).

The protein belongs to the glycosyl hydrolase 19 family. Chitinase class I subfamily.

The catalysed reaction is Random endo-hydrolysis of N-acetyl-beta-D-glucosaminide (1-&gt;4)-beta-linkages in chitin and chitodextrins.. Defense against chitin-containing fungal pathogens. The protein is Endochitinase B of Pisum sativum (Garden pea).